The sequence spans 483 residues: Altronate oxidoreductase (483 aa).

NAD(+) is bound at residue 18–29 (IIQFGEGNFLRA).

The protein belongs to the mannitol dehydrogenase family. UxaB subfamily.

The enzyme catalyses D-altronate + NAD(+) = keto-D-tagaturonate + NADH + H(+). It participates in carbohydrate metabolism; pentose and glucuronate interconversion. This chain is Altronate oxidoreductase, found in Cronobacter sakazakii (strain ATCC BAA-894) (Enterobacter sakazakii).